Consider the following 367-residue polypeptide: Putative transport protein MT0215 (367 aa).

Helical transmembrane passes span 18–38, 41–61, 74–94, 161–181, 228–248, 249–269, 270–290, 314–334, and 337–357; these read AAWA…LWVL, FEVI…LVPP, VAVT…LTFV, ITEL…FLYG, AGVG…LASL, VFFG…LAVV, VALL…LIAV, VVLA…LLAV, and VAFF…ADVA.

Belongs to the autoinducer-2 exporter (AI-2E) (TC 2.A.86) family.

It is found in the cell membrane. The chain is Putative transport protein MT0215 from Mycobacterium tuberculosis (strain CDC 1551 / Oshkosh).